The primary structure comprises 250 residues: Electron transport regulator A (250 aa).

Residues 164-237 (KNAEERLAAF…GKYIIIVDHH (74 aa)) enclose the HTH crp-type domain. A DNA-binding region (H-T-H motif) is located at residues 197 to 216 (RGDIGNYLGLTVETISRLLG).

In terms of assembly, monomer.

Regulates anaerobic growth on fumarate, nitrite, Fe(3+), TMAO, DMSO, thiosulfate and sulfite, but not on nitrate nor Mn(4+). The polypeptide is Electron transport regulator A (etrA) (Shewanella oneidensis (strain ATCC 700550 / JCM 31522 / CIP 106686 / LMG 19005 / NCIMB 14063 / MR-1)).